Reading from the N-terminus, the 648-residue chain is Biosynthetic arginine decarboxylase (648 aa).

N6-(pyridoxal phosphate)lysine is present on Lys109. A substrate-binding site is contributed by 291 to 301 (IDVGGGLGIDF).

The protein belongs to the Orn/Lys/Arg decarboxylase class-II family. SpeA subfamily. Requires Mg(2+) as cofactor. The cofactor is pyridoxal 5'-phosphate.

It carries out the reaction L-arginine + H(+) = agmatine + CO2. It participates in amine and polyamine biosynthesis; agmatine biosynthesis; agmatine from L-arginine: step 1/1. Functionally, catalyzes the biosynthesis of agmatine from arginine. This is Biosynthetic arginine decarboxylase from Prochlorococcus marinus (strain MIT 9515).